Here is a 113-residue protein sequence, read N- to C-terminus: Histone H3-8 (113 aa).

The segment covering 1-17 (NTGAKAPRKHLANKAAR) has biased composition (basic residues). The segment at 1-31 (NTGAKAPRKHLANKAARKTAAPANAGIKKPH) is disordered.

Belongs to the histone H3 family. In terms of assembly, the nucleosome is a histone octamer containing two molecules each of H2A, H2B, H3 and H4 assembled in one H3-H4 heterotetramer and two H2A-H2B heterodimers. The octamer wraps approximately 147 bp of DNA.

The protein localises to the nucleus. It is found in the chromosome. Functionally, core component of nucleosome. Nucleosomes wrap and compact DNA into chromatin, limiting DNA accessibility to the cellular machineries which require DNA as a template. Histones thereby play a central role in transcription regulation, DNA repair, DNA replication and chromosomal stability. DNA accessibility is regulated via a complex set of post-translational modifications of histones, also called histone code, and nucleosome remodeling. The protein is Histone H3-8 (H3-8) of Stylonychia lemnae (Ciliate).